The following is a 110-amino-acid chain: Large ribosomal subunit protein uL22 (110 aa).

Belongs to the universal ribosomal protein uL22 family. In terms of assembly, part of the 50S ribosomal subunit.

In terms of biological role, this protein binds specifically to 23S rRNA; its binding is stimulated by other ribosomal proteins, e.g. L4, L17, and L20. It is important during the early stages of 50S assembly. It makes multiple contacts with different domains of the 23S rRNA in the assembled 50S subunit and ribosome. Its function is as follows. The globular domain of the protein is located near the polypeptide exit tunnel on the outside of the subunit, while an extended beta-hairpin is found that lines the wall of the exit tunnel in the center of the 70S ribosome. The sequence is that of Large ribosomal subunit protein uL22 from Maridesulfovibrio salexigens (strain ATCC 14822 / DSM 2638 / NCIMB 8403 / VKM B-1763) (Desulfovibrio salexigens).